We begin with the raw amino-acid sequence, 503 residues long: MSAWAALLLLWGLSLSPVTEQATFFDPRPSLWAEAGSPLAPWADVTLTCQSPLPTQEFQLLKDGVGQEPVHLESPAHEHRFPLGPVTSTTRGLYRCSYKGNNDWISPSNLVEVTGAEPLPAPSISTSPVSWITPGLNTTLLCLSGLRGVTFLLRLEGEDQFLEVAEAPEATQATFPVHRAGNYSCSYRTHAAGTPSEPSATVTIEELDPPPAPTLTVDRESAKVLRPGSSASLTCVAPLSGVDFQLRRGAEEQLVPRASTSPDRVFFRLSALAAGDGSGYTCRYRLRSELAAWSRDSAPAELVLSDGTLPAPELSAEPAILSPTPGALVQLRCRAPRAGVRFALVRKDAGGRQVQRVLSPAGPEAQFELRGVSAVDSGNYSCVYVDTSPPFAGSKPSATLELRVDGPLPRPQLRALWTGALTPGRDAVLRCEAEVPDVSFLLLRAGEEEPLAVAWSTHGPADLVLTSVGPQHAGTYSCRYRTGGPRSLLSELSDPVELRVAGS.

Positions 1–21 are cleaved as a signal peptide; the sequence is MSAWAALLLLWGLSLSPVTEQ. 5 Ig-like V-type domains span residues 27–115, 117–204, 208–305, 307–405, and 406–501; these read PRPS…EVTG, EPLP…TVTI, DPPP…LVLS, GTLP…LRVD, and GPLP…LRVA. A disulfide bridge links C49 with C96. N137 and N182 each carry an N-linked (GlcNAc...) asparagine glycan. 4 cysteine pairs are disulfide-bonded: C142/C185, C235/C282, C333/C382, and C431/C478. N-linked (GlcNAc...) asparagine glycosylation occurs at N379.

Interacts with CRISP3. In terms of tissue distribution, plasma.

It is found in the secreted. This chain is Alpha-1B-glycoprotein, found in Bos taurus (Bovine).